The sequence spans 125 residues: Fluoride-specific ion channel FluC (125 aa).

Helical transmembrane passes span Phe-7 to Val-27, Gly-36 to Ser-56, Pro-63 to Phe-83, and Phe-96 to Cys-116. Na(+) is bound by residues Gly-75 and Thr-78.

This sequence belongs to the fluoride channel Fluc/FEX (TC 1.A.43) family.

The protein resides in the cell inner membrane. The catalysed reaction is fluoride(in) = fluoride(out). Na(+) is not transported, but it plays an essential structural role and its presence is essential for fluoride channel function. Fluoride-specific ion channel. Important for reducing fluoride concentration in the cell, thus reducing its toxicity. This Elusimicrobium minutum (strain Pei191) protein is Fluoride-specific ion channel FluC.